Consider the following 129-residue polypeptide: Glyoxalase domain-containing protein 5 homolog (129 aa).

A VOC domain is found at 5–128; that stretch reads RLDHLVLTVS…DYNLIEISNY (124 aa).

Belongs to the glyoxalase I family.

In Dictyostelium discoideum (Social amoeba), this protein is Glyoxalase domain-containing protein 5 homolog (glod5).